Here is a 287-residue protein sequence, read N- to C-terminus: 2-dehydro-3-deoxyphosphooctonate aldolase (287 aa).

This sequence belongs to the KdsA family.

It localises to the cytoplasm. The catalysed reaction is D-arabinose 5-phosphate + phosphoenolpyruvate + H2O = 3-deoxy-alpha-D-manno-2-octulosonate-8-phosphate + phosphate. It participates in carbohydrate biosynthesis; 3-deoxy-D-manno-octulosonate biosynthesis; 3-deoxy-D-manno-octulosonate from D-ribulose 5-phosphate: step 2/3. Its pathway is bacterial outer membrane biogenesis; lipopolysaccharide biosynthesis. The sequence is that of 2-dehydro-3-deoxyphosphooctonate aldolase from Magnetococcus marinus (strain ATCC BAA-1437 / JCM 17883 / MC-1).